A 256-amino-acid polypeptide reads, in one-letter code: NifU-like protein, mitochondrial (256 aa).

The CxxC motif motif lies at 196 to 199 (CTSC).

This sequence belongs to the NifU family. In terms of assembly, homodimer; in absence of BOL3, probably bridged by an iron-sulfure cluster. Interacts with BOL3. Interacts with apo-target proteins, such as ACO1, LYS4, ACO2 and SDH2.

The protein resides in the mitochondrion matrix. Involved in iron homeostasis within the mitochondrion where it is involved in the assembly of iron-sulfur proteins. Together with BOL3, required during the last step of iron-sulfur protein assembly when the iron-sulfur cluster is inserted into the target protein. Required for protecting iron sulfur clusters from oxidative damage. In Saccharomyces cerevisiae (strain ATCC 204508 / S288c) (Baker's yeast), this protein is NifU-like protein, mitochondrial (NFU1).